The sequence spans 262 residues: Tetrahydromethanopterin S-methyltransferase subunit C (262 aa).

Transmembrane regions (helical) follow at residues 35–57 (FVPS…AGAN), 70–92 (GVPS…GVLI), 97–119 (GLPV…FIVG), 140–162 (LSLM…FSAD), 172–194 (GVIA…ACIG), and 214–236 (WLIF…FWLY).

It belongs to the MtrC family. The complex is composed of 8 subunits; MtrA, MtrB, MtrC, MtrD, MtrE, MtrF, MtrG and MtrH.

Its subcellular location is the cell membrane. The enzyme catalyses 5-methyl-5,6,7,8-tetrahydromethanopterin + coenzyme M + 2 Na(+)(in) = 5,6,7,8-tetrahydromethanopterin + methyl-coenzyme M + 2 Na(+)(out). It participates in one-carbon metabolism; methanogenesis from CO(2); methyl-coenzyme M from 5,10-methylene-5,6,7,8-tetrahydromethanopterin: step 2/2. Functionally, part of a complex that catalyzes the formation of methyl-coenzyme M and tetrahydromethanopterin from coenzyme M and methyl-tetrahydromethanopterin. This is an energy-conserving, sodium-ion translocating step. This is Tetrahydromethanopterin S-methyltransferase subunit C from Methanococcus maripaludis (strain DSM 14266 / JCM 13030 / NBRC 101832 / S2 / LL).